A 236-amino-acid chain; its full sequence is MDDFAYNLRRAETGVLLLADDLTVTAVSPGALSLLGLDKPGALLGRPILDLHPPPLRPKVAVLLKTARGPSGPAATAVLSLRGGPVLIRASALTGQGETAFALVLTAVGESRETKEGPSARPAPPGYLRKVPLGLGETTEFVDTAGVIYLEADGHYSRVHTAFGHSFCPLALAELERRLDPDQFLRVHRSYIVALAHVRAFRKRESGGLLVMDTGAGDLVPIGRAQVTRLRGLLAI.

The PAS domain maps to 1-64 (MDDFAYNLRR…PLRPKVAVLL (64 aa)). H52 is a heme binding site. Positions 131 to 236 (VPLGLGETTE…VTRLRGLLAI (106 aa)) constitute an HTH LytTR-type domain.

Requires heme as cofactor.

Functionally, activates the expression of the CowN protein in response to carbon monoxide (CO). Is required to sustain N(2)-dependent growth in the presence of low levels of carbon monoxide (CO). The sequence is that of CO-responsive transcriptional regulator RcoM (rcoM) from Rhodospirillum rubrum (strain ATCC 11170 / ATH 1.1.1 / DSM 467 / LMG 4362 / NCIMB 8255 / S1).